Reading from the N-terminus, the 117-residue chain is Immunoglobulin heavy variable 1-2 (117 aa).

The signal sequence occupies residues 1–19; the sequence is MDWTWRILFLVAAATGAHS. Position 20 is a pyrrolidone carboxylic acid (Gln20). The interval 20–44 is framework-1; it reads QVQLVQSGAEVKKPGASVKVSCKAS. In terms of domain architecture, Ig-like spans 20–117; the sequence is QVQLVQSGAE…DDTAVYYCAR (98 aa). Cysteines 41 and 115 form a disulfide. Positions 45 to 52 are complementarity-determining-1; that stretch reads GYTFTGYY. The framework-2 stretch occupies residues 53-69; the sequence is MHWVRQAPGQGLEWMGW. The tract at residues 70–77 is complementarity-determining-2; that stretch reads INPNSGGT. The segment at 78–115 is framework-3; that stretch reads NYAQKFQGWVTMTRDTSISTAYMELSRLRSDDTAVYYC. Residues 116–117 form a complementarity-determining-3 region; that stretch reads AR.

Immunoglobulins are composed of two identical heavy chains and two identical light chains; disulfide-linked.

The protein resides in the secreted. Its subcellular location is the cell membrane. V region of the variable domain of immunoglobulin heavy chains that participates in the antigen recognition. Immunoglobulins, also known as antibodies, are membrane-bound or secreted glycoproteins produced by B lymphocytes. In the recognition phase of humoral immunity, the membrane-bound immunoglobulins serve as receptors which, upon binding of a specific antigen, trigger the clonal expansion and differentiation of B lymphocytes into immunoglobulins-secreting plasma cells. Secreted immunoglobulins mediate the effector phase of humoral immunity, which results in the elimination of bound antigens. The antigen binding site is formed by the variable domain of one heavy chain, together with that of its associated light chain. Thus, each immunoglobulin has two antigen binding sites with remarkable affinity for a particular antigen. The variable domains are assembled by a process called V-(D)-J rearrangement and can then be subjected to somatic hypermutations which, after exposure to antigen and selection, allow affinity maturation for a particular antigen. The chain is Immunoglobulin heavy variable 1-2 from Homo sapiens (Human).